The sequence spans 152 residues: Small ribosomal subunit protein uS15 (152 aa).

Positions 1–20 are disordered; sequence MNKRRANGSSHSTRPVRTGS.

It belongs to the universal ribosomal protein uS15 family. As to quaternary structure, part of the 30S ribosomal subunit.

In Metallosphaera sedula (strain ATCC 51363 / DSM 5348 / JCM 9185 / NBRC 15509 / TH2), this protein is Small ribosomal subunit protein uS15.